Reading from the N-terminus, the 299-residue chain is Dermonecrotic toxin LiSicTox-alphaIVA1 (299 aa).

Residues 1 to 18 form the signal peptide; that stretch reads MLFPTALIFGCWALVIEG. His-30 is a catalytic residue. 2 residues coordinate Mg(2+): Glu-50 and Asp-52. His-66 acts as the Nucleophile in catalysis. Intrachain disulfides connect Cys-70-Cys-76 and Cys-72-Cys-217. Asp-110 contributes to the Mg(2+) binding site.

This sequence belongs to the arthropod phospholipase D family. Class II subfamily. Class IIa sub-subfamily. Mg(2+) is required as a cofactor. As to expression, expressed by the venom gland.

Its subcellular location is the secreted. It catalyses the reaction an N-(acyl)-sphingosylphosphocholine = an N-(acyl)-sphingosyl-1,3-cyclic phosphate + choline. The enzyme catalyses an N-(acyl)-sphingosylphosphoethanolamine = an N-(acyl)-sphingosyl-1,3-cyclic phosphate + ethanolamine. It carries out the reaction a 1-acyl-sn-glycero-3-phosphocholine = a 1-acyl-sn-glycero-2,3-cyclic phosphate + choline. The catalysed reaction is a 1-acyl-sn-glycero-3-phosphoethanolamine = a 1-acyl-sn-glycero-2,3-cyclic phosphate + ethanolamine. Functionally, dermonecrotic toxins cleave the phosphodiester linkage between the phosphate and headgroup of certain phospholipids (sphingolipid and lysolipid substrates), forming an alcohol (often choline) and a cyclic phosphate. This toxin acts on sphingomyelin (SM) with high activity. It may also act on ceramide phosphoethanolamine (CPE), lysophosphatidylcholine (LPC) and lysophosphatidylethanolamine (LPE), but not on lysophosphatidylserine (LPS), and lysophosphatidylglycerol (LPG). It acts by transphosphatidylation, releasing exclusively cyclic phosphate products as second products. Has hemolytic activity in human erythrocytes in a dose-dependent manner. In vivo, this toxin induces dermonecrosis, edema, hemorrhage, massive inflammatory response, as well as vascular permeability. In addition, thrombus formation has also been detected in dermal blood vessels. It also induces platelet aggregation. It is noteworthy that a Glu-248 replaces the Asp present in paralogs, without decrease in catalytic and hemolytic activities. This Loxosceles intermedia (Brown spider) protein is Dermonecrotic toxin LiSicTox-alphaIVA1.